We begin with the raw amino-acid sequence, 352 residues long: C-C chemokine receptor type 5 (352 aa).

Over 1 to 30 the chain is Extracellular; sequence MDYQVSSPTYDIDYYTSEPCQKINVKQIAA. Sulfotyrosine is present on Tyr3. O-linked (GalNAc...) serine glycosylation is found at Ser6 and Ser7. Tyr10, Tyr14, and Tyr15 each carry sulfotyrosine. 2 disulfides stabilise this stretch: Cys20-Cys269 and Cys101-Cys178. The helical transmembrane segment at 31–58 threads the bilayer; it reads HLLPPLYSLVFIFGFVGNILVVLILINC. Residues 59–68 are Cytoplasmic-facing; sequence KRLKSMTDIY. Residues 69-89 form a helical membrane-spanning segment; the sequence is LLNLAISDLLFLLTVPFWAHY. At 90–102 the chain is on the extracellular side; sequence AAAQWDFGNIMCQ. Residues 103-124 traverse the membrane as a helical segment; sequence LLTGLYFIGFFSGIFFIILLTI. The Cytoplasmic segment spans residues 125–141; sequence DRYLAIVHAVFALKART. A helical transmembrane segment spans residues 142 to 166; that stretch reads VTFGVVTSVITWVVAVFASLPGIIF. Over 167 to 198 the chain is Extracellular; sequence TRSQREGLHYTCSSHFPYSQYQFWKNFRTLKI. Residues 199–218 form a helical membrane-spanning segment; sequence VILGLVLPLLVMVICYSGIL. At 219–235 the chain is on the cytoplasmic side; that stretch reads KTLLRCRNEKKRHRAVR. The helical transmembrane segment at 236–260 threads the bilayer; the sequence is LIFTIMIVYFLFWAPYNIVLLLNTF. The Extracellular portion of the chain corresponds to 261–277; that stretch reads QEFFGLNNCSSSNRLDQ. Residues 278-301 traverse the membrane as a helical segment; sequence AMQVTETLGMTHCCINPIIYAFVG. The Cytoplasmic portion of the chain corresponds to 302–352; sequence EKFRNYLLVFFQKHIAKRFCKCCSIFQQEAPERASSVYTRSTGEQEISVGL. 3 S-palmitoyl cysteine lipidation sites follow: Cys321, Cys323, and Cys324. Phosphoserine; by BARK1 is present on residues Ser336, Ser337, Ser342, and Ser349.

This sequence belongs to the G-protein coupled receptor 1 family. As to quaternary structure, interacts with PRAF2. Efficient ligand binding to CCL3/MIP-1alpha and CCL4/MIP-1beta requires sulfation, O-glycosylation and sialic acid modifications. Glycosylation on Ser-6 is required for efficient binding of CCL4. Interacts with GRK2. Interacts with ARRB1 and ARRB2. Interacts with CNIH4. Interacts with S100A4; this interaction stimulates T-lymphocyte chemotaxis. Post-translationally, sulfated on at least 2 of the N-terminal tyrosines. Sulfation is required for efficient binding of the chemokines, CCL3 and CCL4. In terms of processing, palmitoylation in the C-terminal is important for cell surface expression. Phosphorylation on serine residues in the C-terminal is stimulated by binding CC chemokines especially by APO-RANTES. Post-translationally, O-glycosylated, but not N-glycosylated. Ser-6 appears to be the major site even if Ser-7 may be also O-glycosylated. Also sialylated glycans present which contribute to chemokine binding. Thr-16 and Ser-17 may also be glycosylated and, if so, with small moieties such as a T-antigen.

The protein resides in the cell membrane. Functionally, receptor for a number of inflammatory CC-chemokines including CCL3/MIP-1-alpha, CCL4/MIP-1-beta and RANTES and subsequently transduces a signal by increasing the intracellular calcium ion level. May play a role in the control of granulocytic lineage proliferation or differentiation. Participates in T-lymphocyte migration to the infection site by acting as a chemotactic receptor. The chain is C-C chemokine receptor type 5 (CCR5) from Mandrillus sphinx (Mandrill).